A 371-amino-acid chain; its full sequence is tRNA N6-adenosine threonylcarbamoyltransferase (371 aa).

Fe cation contacts are provided by His-110 and His-114. Substrate is bound by residues 132–136 (LVSGG), Asp-165, Gly-178, Asp-182, and Asn-289. Asp-317 is a Fe cation binding site.

This sequence belongs to the KAE1 / TsaD family. Requires Fe(2+) as cofactor.

Its subcellular location is the cytoplasm. The catalysed reaction is L-threonylcarbamoyladenylate + adenosine(37) in tRNA = N(6)-L-threonylcarbamoyladenosine(37) in tRNA + AMP + H(+). In terms of biological role, required for the formation of a threonylcarbamoyl group on adenosine at position 37 (t(6)A37) in tRNAs that read codons beginning with adenine. Is involved in the transfer of the threonylcarbamoyl moiety of threonylcarbamoyl-AMP (TC-AMP) to the N6 group of A37, together with TsaE and TsaB. TsaD likely plays a direct catalytic role in this reaction. The chain is tRNA N6-adenosine threonylcarbamoyltransferase from Solidesulfovibrio magneticus (strain ATCC 700980 / DSM 13731 / RS-1) (Desulfovibrio magneticus).